The following is a 156-amino-acid chain: ATP synthase subunit b (156 aa).

The helical transmembrane segment at L11–G31 threads the bilayer.

It belongs to the ATPase B chain family. As to quaternary structure, F-type ATPases have 2 components, F(1) - the catalytic core - and F(0) - the membrane proton channel. F(1) has five subunits: alpha(3), beta(3), gamma(1), delta(1), epsilon(1). F(0) has three main subunits: a(1), b(2) and c(10-14). The alpha and beta chains form an alternating ring which encloses part of the gamma chain. F(1) is attached to F(0) by a central stalk formed by the gamma and epsilon chains, while a peripheral stalk is formed by the delta and b chains.

The protein resides in the cell inner membrane. In terms of biological role, f(1)F(0) ATP synthase produces ATP from ADP in the presence of a proton or sodium gradient. F-type ATPases consist of two structural domains, F(1) containing the extramembraneous catalytic core and F(0) containing the membrane proton channel, linked together by a central stalk and a peripheral stalk. During catalysis, ATP synthesis in the catalytic domain of F(1) is coupled via a rotary mechanism of the central stalk subunits to proton translocation. Component of the F(0) channel, it forms part of the peripheral stalk, linking F(1) to F(0). The chain is ATP synthase subunit b from Colwellia psychrerythraea (strain 34H / ATCC BAA-681) (Vibrio psychroerythus).